Consider the following 325-residue polypeptide: Phosphate acyltransferase (325 aa).

This sequence belongs to the PlsX family. Homodimer. Probably interacts with PlsY.

The protein localises to the cytoplasm. It catalyses the reaction a fatty acyl-[ACP] + phosphate = an acyl phosphate + holo-[ACP]. Its pathway is lipid metabolism; phospholipid metabolism. Its function is as follows. Catalyzes the reversible formation of acyl-phosphate (acyl-PO(4)) from acyl-[acyl-carrier-protein] (acyl-ACP). This enzyme utilizes acyl-ACP as fatty acyl donor, but not acyl-CoA. The chain is Phosphate acyltransferase from Staphylococcus epidermidis (strain ATCC 12228 / FDA PCI 1200).